The chain runs to 31 residues: Photosystem II reaction center protein T (31 aa).

Residues 3–23 traverse the membrane as a helical segment; sequence SFAYILILAFSIGTLFFAIAL.

It belongs to the PsbT family. PSII is composed of 1 copy each of membrane proteins PsbA, PsbB, PsbC, PsbD, PsbE, PsbF, PsbH, PsbI, PsbJ, PsbK, PsbL, PsbM, PsbT, PsbX, PsbY, PsbZ, Psb30/Ycf12, peripheral proteins PsbO, CyanoQ (PsbQ), PsbU, PsbV and a large number of cofactors. It forms dimeric complexes.

It localises to the cellular thylakoid membrane. Found at the monomer-monomer interface of the photosystem II (PS II) dimer, plays a role in assembly and dimerization of PSII. PSII is a light-driven water plastoquinone oxidoreductase, using light energy to abstract electrons from H(2)O, generating a proton gradient subsequently used for ATP formation. In Synechococcus sp. (strain RCC307), this protein is Photosystem II reaction center protein T.